Here is a 44-residue protein sequence, read N- to C-terminus: Protein PsbN (44 aa).

Residues 6–26 (FFFTLFLWFFLLSITIYSIYI) form a helical membrane-spanning segment.

The protein belongs to the PsbN family.

It is found in the plastid. The protein resides in the chloroplast thylakoid membrane. Its function is as follows. May play a role in photosystem I and II biogenesis. The polypeptide is Protein PsbN (Oedogonium cardiacum (Filamentous green alga)).